Reading from the N-terminus, the 271-residue chain is Formamidopyrimidine-DNA glycosylase (271 aa).

Pro-2 functions as the Schiff-base intermediate with DNA in the catalytic mechanism. Glu-3 acts as the Proton donor in catalysis. Catalysis depends on Lys-58, which acts as the Proton donor; for beta-elimination activity. The DNA site is built by His-92, Arg-111, and Lys-152. An FPG-type zinc finger spans residues 237–271; it reads YVYGKVQKPCKICNNIITLIRQNGRSTYFCNACQN. The active-site Proton donor; for delta-elimination activity is the Arg-261.

It belongs to the FPG family. As to quaternary structure, monomer. Zn(2+) serves as cofactor.

It carries out the reaction Hydrolysis of DNA containing ring-opened 7-methylguanine residues, releasing 2,6-diamino-4-hydroxy-5-(N-methyl)formamidopyrimidine.. The catalysed reaction is 2'-deoxyribonucleotide-(2'-deoxyribose 5'-phosphate)-2'-deoxyribonucleotide-DNA = a 3'-end 2'-deoxyribonucleotide-(2,3-dehydro-2,3-deoxyribose 5'-phosphate)-DNA + a 5'-end 5'-phospho-2'-deoxyribonucleoside-DNA + H(+). Involved in base excision repair of DNA damaged by oxidation or by mutagenic agents. Acts as a DNA glycosylase that recognizes and removes damaged bases. Has a preference for oxidized purines, such as 7,8-dihydro-8-oxoguanine (8-oxoG). Has AP (apurinic/apyrimidinic) lyase activity and introduces nicks in the DNA strand. Cleaves the DNA backbone by beta-delta elimination to generate a single-strand break at the site of the removed base with both 3'- and 5'-phosphates. The chain is Formamidopyrimidine-DNA glycosylase from Wolbachia sp. subsp. Drosophila simulans (strain wRi).